The chain runs to 267 residues: Undecaprenyl-diphosphatase (267 aa).

8 helical membrane-spanning segments follow: residues 1 to 21 (MSYF…FLPI), 39 to 59 (QGLA…VIYF), 83 to 103 (AKLA…GLLM), 111 to 131 (LRSA…LWWV), 144 to 164 (TGWK…IPGT), 189 to 209 (FLMS…KLVT), 218 to 238 (FLLT…HFFL), and 246 to 266 (MTPF…FLLM).

Belongs to the UppP family.

It is found in the cell inner membrane. It catalyses the reaction di-trans,octa-cis-undecaprenyl diphosphate + H2O = di-trans,octa-cis-undecaprenyl phosphate + phosphate + H(+). Functionally, catalyzes the dephosphorylation of undecaprenyl diphosphate (UPP). Confers resistance to bacitracin. The chain is Undecaprenyl-diphosphatase from Vibrio campbellii (strain ATCC BAA-1116).